A 396-amino-acid polypeptide reads, in one-letter code: Gap junction gamma-1 protein (396 aa).

At 1–22 (MSWSFLTRLLEEIHNHSTFVGK) the chain is on the cytoplasmic side. Residues 23–45 (IWLTVLIVFRIVLTAVGGESIYY) traverse the membrane as a helical segment. Topologically, residues 46–75 (DEQSKFVCNTEQPGCENVCYDAFAPLSHVR) are extracellular. A helical membrane pass occupies residues 76–95 (FWVFQIILVATPSVMYLGYA). Over 96–175 (IHKIAKMEHG…RRIREDGLMK (80 aa)) the chain is Cytoplasmic. The segment at 145-165 (ELESEKENKEQNQSKPKHDGR) is disordered. Residues 147 to 156 (ESEKENKEQN) show a composition bias toward basic and acidic residues. The helical transmembrane segment at 176–198 (IYVLQLLARTMFEVGFLIGQYFL) threads the bilayer. The Extracellular segment spans residues 199-228 (YGFQVHPFYVCSRVPCPHKIDCFISRPTEK). A helical transmembrane segment spans residues 229 to 248 (TIFLLIMYGVTGLCLLLNIW). Residues 249–396 (EMLHLGFGTI…SGDGKTSVWI (148 aa)) lie on the Cytoplasmic side of the membrane. The interval 357 to 396 (NHQNNPHGPREKKAKVGSKAGSNKSSASSKSGDGKTSVWI) is disordered. The segment covering 373-396 (GSKAGSNKSSASSKSGDGKTSVWI) has biased composition (low complexity).

Belongs to the connexin family. Gamma-type subfamily. In terms of assembly, a connexon is composed of a hexamer of connexins. Interacts with CNST.

The protein resides in the cell membrane. It localises to the cell junction. The protein localises to the gap junction. Functionally, one gap junction consists of a cluster of closely packed pairs of transmembrane channels, the connexons, through which materials of low MW diffuse from one cell to a neighboring cell. This chain is Gap junction gamma-1 protein (GJC1), found in Sus scrofa (Pig).